The sequence spans 229 residues: Ribonuclease 3 (229 aa).

One can recognise an RNase III domain in the interval L5–D127. A Mg(2+)-binding site is contributed by E40. D44 is a catalytic residue. Residues D113 and E116 each contribute to the Mg(2+) site. E116 is a catalytic residue. A DRBM domain is found at D154–V224.

The protein belongs to the ribonuclease III family. Homodimer. Requires Mg(2+) as cofactor.

It localises to the cytoplasm. The enzyme catalyses Endonucleolytic cleavage to 5'-phosphomonoester.. Functionally, digests double-stranded RNA. Involved in the processing of primary rRNA transcript to yield the immediate precursors to the large and small rRNAs (23S and 16S). Processes some mRNAs, and tRNAs when they are encoded in the rRNA operon. Processes pre-crRNA and tracrRNA of type II CRISPR loci if present in the organism. In Pseudomonas putida (strain GB-1), this protein is Ribonuclease 3.